A 276-amino-acid polypeptide reads, in one-letter code: MALKHFNPVTASLRGTVLVDRSELWKGKPVKTLTEGKHSTGGRNNHGRITSRFRGGGHKQTYRYVDFKRRKADVPATVERLEYDPNRTAFIALIKYQDGELSYILAPQRLKAGDVVVSGARADIKPGNAMPLGAIPVGTIIHNIEMKPGAGGKIARSAGTYAQLVGKDAGYAQIKLMSGELRVVRAECYATVGAVSNPDNSNIHIGKAGRSRWLGRRPHNRGVVMNPVDHPHGGGEGRTSGGRHPVTPWGKPTKGYKTRTNKRTDSLIIRRRNKGK.

Residues 213 to 264 (WLGRRPHNRGVVMNPVDHPHGGGEGRTSGGRHPVTPWGKPTKGYKTRTNKRT) are disordered.

It belongs to the universal ribosomal protein uL2 family. In terms of assembly, part of the 50S ribosomal subunit. Forms a bridge to the 30S subunit in the 70S ribosome.

Its function is as follows. One of the primary rRNA binding proteins. Required for association of the 30S and 50S subunits to form the 70S ribosome, for tRNA binding and peptide bond formation. It has been suggested to have peptidyltransferase activity; this is somewhat controversial. Makes several contacts with the 16S rRNA in the 70S ribosome. The sequence is that of Large ribosomal subunit protein uL2 from Granulibacter bethesdensis (strain ATCC BAA-1260 / CGDNIH1).